The following is a 1103-amino-acid chain: Trophozoite exported protein 1 (1103 aa).

A coiled-coil region spans residues 173–212 (KKEKIEDKKYEQDDEEENEEEEEEEEEEEGEEENKEDEEF). 2 disordered regions span residues 178–210 (EDKK…KEDE) and 271–301 (KSYS…DNGK). Positions 184-210 (QDDEEENEEEEEEEEEEEGEEENKEDE) are enriched in acidic residues. Residues 271–280 (KSYSGDEKIN) are compositionally biased toward basic and acidic residues. 2 coiled-coil regions span residues 304 to 330 (DYVK…LECN) and 478 to 518 (YKNY…KLNN). The tract at residues 544–601 (YFDEGENPYNRNNKNYRTDNKNSDDNNNNNNYYYNNYNSDDNYNSEDNEYNNGNYRFR) is disordered. A compositionally biased stretch (low complexity) spans 568 to 585 (DNNNNNNYYYNNYNSDDN). 3 coiled-coil regions span residues 650–791 (FRNL…LSGI), 819–932 (DEKY…IYKK), and 993–1030 (NKKL…NLSK). The RING-type zinc-finger motif lies at 1050 to 1089 (CSVCMENFRNYIIIKCGHIYCNNCIFNNLKTRNRKCPQCK).

Its subcellular location is the host cell membrane. This chain is Trophozoite exported protein 1, found in Plasmodium falciparum (isolate 3D7).